We begin with the raw amino-acid sequence, 584 residues long: Sensor histidine kinase/phosphatase LytS (584 aa).

6 helical membrane passes run 2–22, 42–62, 92–112, 121–141, 154–174, and 186–206; these read LSLTMLLLERVGLIIILAYVL, WQLCIIFSLFALMSNLTGIVI, VAGLVGGPFVGLFVGVISGIF, AQVYLISSIFIGIIAGYFGLQ, SAMIGIVMEMIQMLSILTFSH, and IALPMIIVNSVGTAIFMSIII. A GAF domain is found at 311–363; sequence HPNCPLRAAIVIPLEMHGSIVGTLKMYFTNPNDLTFVERQLAEGLANIFSSQI. Residues 379 to 461 form the Histidine kinase domain; the sequence is EIKSLQAQVS…RYPGRFNINI (83 aa). Phosphohistidine; by autocatalysis is present on histidine 390.

Autophosphorylated on His-390.

The protein localises to the cell membrane. The catalysed reaction is ATP + protein L-histidine = ADP + protein N-phospho-L-histidine.. Member of the two-component regulatory system LytR/LytS that regulates genes involved in autolysis, programmed cell death, biofilm formation and cell wall metabolism. Also participates in sensing and responding to host defense cationic antimicrobial peptides (HDPs). Functions as a sensor protein kinase which is autophosphorylated at a histidine residue and transfers its phosphate group to the conserved aspartic acid residue in the regulatory domain of LytR. In turn, LytR binds to the upstream promoter regions of target genes including lrgA and lrgB, to positively regulate their expression. Also possesses a phosphatase activity that dephosphorylates and thus inactivates LytR. The chain is Sensor histidine kinase/phosphatase LytS (lytS) from Staphylococcus aureus (strain USA300).